Consider the following 544-residue polypeptide: Chaperonin GroEL 1 (544 aa).

Residues 30–33 (TLGP), Lys51, 87–91 (DGTTT), Gly415, and Asp494 each bind ATP.

This sequence belongs to the chaperonin (HSP60) family. In terms of assembly, forms a cylinder of 14 subunits composed of two heptameric rings stacked back-to-back. Interacts with the co-chaperonin GroES.

Its subcellular location is the cytoplasm. The catalysed reaction is ATP + H2O + a folded polypeptide = ADP + phosphate + an unfolded polypeptide.. Its function is as follows. Together with its co-chaperonin GroES, plays an essential role in assisting protein folding. The GroEL-GroES system forms a nano-cage that allows encapsulation of the non-native substrate proteins and provides a physical environment optimized to promote and accelerate protein folding. The sequence is that of Chaperonin GroEL 1 from Syntrophus aciditrophicus (strain SB).